We begin with the raw amino-acid sequence, 114 residues long: T cell receptor beta variable 6-2 (114 aa).

Positions 1 to 21 are cleaved as a signal peptide; sequence MSLGLLCCGAFSLLWAGPVNA. The 93-residue stretch at 22–114 folds into the Ig-like domain; that stretch reads GVTQTPKFRV…TSVYFCASSY (93 aa). Cysteine 42 and cysteine 110 are joined by a disulfide. The N-linked (GlcNAc...) asparagine glycan is linked to asparagine 84.

In terms of assembly, alpha-beta TR is a heterodimer composed of an alpha and beta chain; disulfide-linked. The alpha-beta TR is associated with the transmembrane signaling CD3 coreceptor proteins to form the TR-CD3 (TcR or TCR). The assembly of alpha-beta TR heterodimers with CD3 occurs in the endoplasmic reticulum where a single alpha-beta TR heterodimer associates with one CD3D-CD3E heterodimer, one CD3G-CD3E heterodimer and one CD247 homodimer forming a stable octameric structure. CD3D-CD3E and CD3G-CD3E heterodimers preferentially associate with TR alpha and TR beta chains, respectively. The association of the CD247 homodimer is the last step of TcR assembly in the endoplasmic reticulum and is required for transport to the cell surface.

It is found in the cell membrane. Its function is as follows. V region of the variable domain of T cell receptor (TR) beta chain that participates in the antigen recognition. Alpha-beta T cell receptors are antigen specific receptors which are essential to the immune response and are present on the cell surface of T lymphocytes. Recognize peptide-major histocompatibility (MH) (pMH) complexes that are displayed by antigen presenting cells (APC), a prerequisite for efficient T cell adaptive immunity against pathogens. Binding of alpha-beta TR to pMH complex initiates TR-CD3 clustering on the cell surface and intracellular activation of LCK that phosphorylates the ITAM motifs of CD3G, CD3D, CD3E and CD247 enabling the recruitment of ZAP70. In turn ZAP70 phosphorylates LAT, which recruits numerous signaling molecules to form the LAT signalosome. The LAT signalosome propagates signal branching to three major signaling pathways, the calcium, the mitogen-activated protein kinase (MAPK) kinase and the nuclear factor NF-kappa-B (NF-kB) pathways, leading to the mobilization of transcription factors that are critical for gene expression and essential for T cell growth and differentiation. The T cell repertoire is generated in the thymus, by V-(D)-J rearrangement. This repertoire is then shaped by intrathymic selection events to generate a peripheral T cell pool of self-MH restricted, non-autoaggressive T cells. Post-thymic interaction of alpha-beta TR with the pMH complexes shapes TR structural and functional avidity. This is T cell receptor beta variable 6-2 from Homo sapiens (Human).